The following is a 117-amino-acid chain: Large ribosomal subunit protein bL19 (117 aa).

The protein belongs to the bacterial ribosomal protein bL19 family.

Functionally, this protein is located at the 30S-50S ribosomal subunit interface and may play a role in the structure and function of the aminoacyl-tRNA binding site. The polypeptide is Large ribosomal subunit protein bL19 (Halorhodospira halophila (strain DSM 244 / SL1) (Ectothiorhodospira halophila (strain DSM 244 / SL1))).